Consider the following 413-residue polypeptide: N-acylneuraminate cytidylyltransferase (413 aa).

The protein belongs to the CMP-NeuNAc synthase family. Requires Mg(2+) as cofactor. The cofactor is Mn(2+).

The protein localises to the cytoplasm. It carries out the reaction an N-acylneuraminate + CTP = a CMP-N-acyl-beta-neuraminate + diphosphate. Functionally, catalyzes the formation of CMP-N-acetylneuraminic acid (CMP-NeuNAc), which is essential for the formation of the capsule. The sequence is that of N-acylneuraminate cytidylyltransferase (neuA) from Streptococcus agalactiae serotype V (strain ATCC BAA-611 / 2603 V/R).